Reading from the N-terminus, the 282-residue chain is V-set domain-containing T-cell activation inhibitor 1 (282 aa).

Positions 1 to 24 are cleaved as a signal peptide; the sequence is MASLGQILFWSIISIIIILAGAIA. The Extracellular segment spans residues 25–259; that stretch reads LIIGFGISGR…HLQLLNSKAS (235 aa). 2 consecutive Ig-like V-type domains span residues 35–146 and 153–241; these read HSIT…LEYK and PEVN…IKVT. Intrachain disulfides connect C56-C130 and C168-C225. The N-linked (GlcNAc...) asparagine glycan is linked to N216. The helical transmembrane segment at 260-280 threads the bilayer; the sequence is LCVSSFFAISWALLPLSPYLM. Topologically, residues 281–282 are cytoplasmic; sequence LK.

The protein belongs to the immunoglobulin superfamily. BTN/MOG family. Post-translationally, N-glycosylated. In terms of tissue distribution, overexpressed in breast, ovarian, endometrial, renal cell (RCC) and non-small-cell lung cancers (NSCLC). Expressed on activated T- and B-cells, monocytes and dendritic cells, but not expressed in most normal tissues (at protein level). Widely expressed, including in kidney, liver, lung, ovary, placenta, spleen and testis.

Its subcellular location is the cell membrane. Negatively regulates T-cell-mediated immune response by inhibiting T-cell activation, proliferation, cytokine production and development of cytotoxicity. When expressed on the cell surface of tumor macrophages, plays an important role, together with regulatory T-cells (Treg), in the suppression of tumor-associated antigen-specific T-cell immunity. Involved in promoting epithelial cell transformation. The chain is V-set domain-containing T-cell activation inhibitor 1 from Homo sapiens (Human).